Consider the following 323-residue polypeptide: DNA-directed RNA polymerase subunit alpha (323 aa).

The segment at 1–233 (MGQEKVTVST…DLFIPFFHAE (233 aa)) is alpha N-terminal domain (alpha-NTD). An alpha C-terminal domain (alpha-CTD) region spans residues 264–323 (IALKYIYIDQSELPPRVYNCLKRSNINTFLELLNNSQEELMKIQDFRIEDVKHILDVLEI).

It belongs to the RNA polymerase alpha chain family. In terms of assembly, in plastids the minimal PEP RNA polymerase catalytic core is composed of four subunits: alpha, beta, beta', and beta''. When a (nuclear-encoded) sigma factor is associated with the core the holoenzyme is formed, which can initiate transcription.

Its subcellular location is the plastid. The protein localises to the chloroplast. It catalyses the reaction RNA(n) + a ribonucleoside 5'-triphosphate = RNA(n+1) + diphosphate. Functionally, DNA-dependent RNA polymerase catalyzes the transcription of DNA into RNA using the four ribonucleoside triphosphates as substrates. The polypeptide is DNA-directed RNA polymerase subunit alpha (Morus indica (Mulberry)).